Consider the following 529-residue polypeptide: Bifunctional purine biosynthesis protein PurH (529 aa).

The MGS-like domain maps to 1–148 (MQQRRPVRRA…KNHKDVAIVV (148 aa)).

Belongs to the PurH family.

It carries out the reaction (6R)-10-formyltetrahydrofolate + 5-amino-1-(5-phospho-beta-D-ribosyl)imidazole-4-carboxamide = 5-formamido-1-(5-phospho-D-ribosyl)imidazole-4-carboxamide + (6S)-5,6,7,8-tetrahydrofolate. The enzyme catalyses IMP + H2O = 5-formamido-1-(5-phospho-D-ribosyl)imidazole-4-carboxamide. Its pathway is purine metabolism; IMP biosynthesis via de novo pathway; 5-formamido-1-(5-phospho-D-ribosyl)imidazole-4-carboxamide from 5-amino-1-(5-phospho-D-ribosyl)imidazole-4-carboxamide (10-formyl THF route): step 1/1. It functions in the pathway purine metabolism; IMP biosynthesis via de novo pathway; IMP from 5-formamido-1-(5-phospho-D-ribosyl)imidazole-4-carboxamide: step 1/1. This is Bifunctional purine biosynthesis protein PurH from Salmonella enteritidis PT4 (strain P125109).